The primary structure comprises 272 residues: uncharacterized protein (272 aa).

One can recognise an HTH merR-type domain in the interval 1–27 (MDTLAFINRALVEEGYSLKDIKLVLIT).

This is an uncharacterized protein from Aquifex aeolicus (strain VF5).